The following is a 456-amino-acid chain: Crinkler effector protein 2 (456 aa).

An N-terminal signal peptide occupies residues 1–17; that stretch reads MVKLVCAIVGVAGSAFP. An LQLFLAK domain region spans residues 18–54; sequence VDTDASQLVGDLKKAIKAENAMTFTGDAKDLQLFLAK. Residues 55–136 are DWL domain; the sequence is QPVDDESGKE…NMELPSSEQI (82 aa). An HVLVXXP motif motif is present at residues 137 to 143; it reads HVLVVVP. N-linked (GlcNAc...) asparagine glycosylation occurs at Asn338.

Belongs to the Crinkler effector family.

Its subcellular location is the secreted. The protein localises to the host nucleus. Secreted effector that effector that induces cell death when expressed in host plants. Induces the expression of defense response genes in tomato. The protein is Crinkler effector protein 2 of Phytophthora infestans (Potato late blight agent).